A 354-amino-acid chain; its full sequence is Vascular endothelial growth factor D (354 aa).

A signal peptide spans 1-21 (MYREWVVVNVFMMLYVQLVQG). Positions 22 to 88 (SSNEHGPVKR…SRSASHRSTR (67 aa)) are cleaved as a propeptide — or 99 (in a minor form). Intrachain disulfides connect C111/C153, C142/C189, and C146/C191. N-linked (GlcNAc...) asparagine glycans are attached at residues N155 and N185. Residues 206-354 (SIQIPEEDRC…AQGPHSRKNP (149 aa)) constitute a propeptide that is removed on maturation. Residues 222-237 (CPIDMLWDSNKCKCVL) form a 1; approximate repeat. A 4 X 16 AA repeats of C-X(10)-C-X-C-X(1,3)-C region spans residues 222–318 (CPIDMLWDSN…PDTCSCEDRC (97 aa)). 3 repeat units span residues 258-273 (CGPHMMFDEDRCECVC), 277-293 (CPKDLIQHPKNCSCFEC), and 301-318 (CQKHKLFHPDTCSCEDRC). A glycan (N-linked (GlcNAc...) asparagine) is linked at N287.

It belongs to the PDGF/VEGF growth factor family. As to quaternary structure, homodimer; non-covalent and antiparallel. In terms of processing, undergoes a complex proteolytic maturation which generates a variety of processed secreted forms with increased activity toward VEGFR-3 and VEGFR-2. VEGF-D first form an antiparallel homodimer linked by disulfide bonds before secretion. The fully processed VEGF-D is composed mostly of two VEGF homology domains (VHDs) bound by non-covalent interactions. As to expression, highly expressed in lung, heart, small intestine and fetal lung, and at lower levels in skeletal muscle, colon, and pancreas.

It is found in the secreted. Functionally, growth factor active in angiogenesis, lymphangiogenesis and endothelial cell growth, stimulating their proliferation and migration and also has effects on the permeability of blood vessels. May function in the formation of the venous and lymphatic vascular systems during embryogenesis, and also in the maintenance of differentiated lymphatic endothelium in adults. Binds and activates VEGFR-2 (KDR/FLK1) and VEGFR-3 (FLT4) receptors. This is Vascular endothelial growth factor D from Homo sapiens (Human).